The chain runs to 353 residues: Protein RecA (353 aa).

An ATP-binding site is contributed by 64-71 (GPESSGKT). The disordered stretch occupies residues 331–353 (LEEASAQKEEVPVEDKLFDDELE). Residues 335-346 (SAQKEEVPVEDK) show a composition bias toward basic and acidic residues.

Belongs to the RecA family.

The protein localises to the cytoplasm. Can catalyze the hydrolysis of ATP in the presence of single-stranded DNA, the ATP-dependent uptake of single-stranded DNA by duplex DNA, and the ATP-dependent hybridization of homologous single-stranded DNAs. It interacts with LexA causing its activation and leading to its autocatalytic cleavage. The sequence is that of Protein RecA from Macrococcus caseolyticus (strain JCSC5402) (Macrococcoides caseolyticum).